Reading from the N-terminus, the 387-residue chain is Colicin-N (387 aa).

Residues 1–11 (MGSNGADNAHN) are compositionally biased toward polar residues. The tract at residues 1 to 106 (MGSNGADNAH…ITITPDNSKP (106 aa)) is disordered. Positions 14–30 (FGGGKNPGIGNTSGAGS) are enriched in gly residues. The span at 31-48 (NGSASSNRGNSNGWSWSN) shows a compositional bias: low complexity. Positions 78 to 87 (GNSGNRGNNG) are enriched in gly residues. The next 2 membrane-spanning stretches (helical) occupy residues 325–345 (IIGG…LSFL) and 350–370 (LAVT…SSFI).

Belongs to the channel forming colicin family.

The protein localises to the cell membrane. Its function is as follows. This colicin is a channel-forming colicin. This class of transmembrane toxins depolarize the cytoplasmic membrane, leading to dissipation of cellular energy. In terms of biological role, colicins are polypeptide toxins produced by and active against E.coli and closely related bacteria. The chain is Colicin-N (cna) from Escherichia coli.